Reading from the N-terminus, the 298-residue chain is Iron/alpha-ketoglutarate-dependent dioxygenase ausO (298 aa).

3 residues coordinate Fe cation: H130, D132, and H211.

Belongs to the PhyH family. As to quaternary structure, homodimer. It depends on Fe cation as a cofactor.

It participates in secondary metabolite biosynthesis; terpenoid biosynthesis. Functionally, iron/alpha-ketoglutarate-dependent dioxygenase; part of the gene cluster that mediates the biosynthesis of calidodehydroaustin, a fungal meroterpenoid. The first step of the pathway is the synthesis of 3,5-dimethylorsellinic acid by the polyketide synthase ausA. 3,5-dimethylorsellinic acid is then prenylated by the polyprenyl transferase ausN. Further epoxidation by the FAD-dependent monooxygenase ausM and cyclization by the probable terpene cyclase ausL lead to the formation of protoaustinoid A. Protoaustinoid A is then oxidized to spiro-lactone preaustinoid A3 by the combined action of the FAD-binding monooxygenases ausB and ausC, and the dioxygenase ausE. Acid-catalyzed keto-rearrangement and ring contraction of the tetraketide portion of preaustinoid A3 by ausJ lead to the formation of preaustinoid A4. The aldo-keto reductase ausK, with the help of ausH, is involved in the next step by transforming preaustinoid A4 into isoaustinone which is in turn hydroxylated by the P450 monooxygenase ausI to form austinolide. The cytochrome P450 monooxygenase ausG modifies austinolide to austinol. Austinol is further acetylated to austin by the O-acetyltransferase ausP, which spontaneously changes to dehydroaustin. The cytochrome P450 monooxygenase ausR then converts dehydroaustin is into 7-dehydrodehydroaustin. The hydroxylation catalyzed by ausR permits the O-acetyltransferase ausQ to add an additional acetyl group to the molecule, leading to the formation of acetoxydehydroaustin. The short chain dehydrogenase ausT catalyzes the reduction of the double bond present between carbon atoms 1 and 2 to convert 7-dehydrodehydroaustin into 1,2-dihydro-7-hydroxydehydroaustin. AusQ catalyzes not only an acetylation reaction but also the addition of the PKS ausV diketide product to 1,2-dihydro-7-hydroxydehydroaustin, forming precalidodehydroaustin. Finally, the iron/alpha-ketoglutarate-dependent dioxygenase converts precalidodehydroaustin into calidodehydroaustin. The polypeptide is Iron/alpha-ketoglutarate-dependent dioxygenase ausO (Aspergillus calidoustus).